We begin with the raw amino-acid sequence, 465 residues long: Serine/threonine-protein kinase AtPK1/AtPK6 (465 aa).

The LVxCxE motif motif lies at L91–E96. Residues F134 to F389 enclose the Protein kinase domain. Residues V140–V148 and K163 each bind ATP. The active-site Proton acceptor is D257. Residues D275–E301 form an activation loop region. At S290 the chain carries Phosphoserine; by PDPK1. In terms of domain architecture, AGC-kinase C-terminal spans K390 to Q460. T449 is subject to Phosphothreonine; by TOR.

The protein belongs to the protein kinase superfamily. AGC Ser/Thr protein kinase family. S6 kinase subfamily. Interacts with RAPTOR1. Interacts with RBR1-E2FB complex through its LVxCxE motif. Interacts with TAP46. Binds to MRF1. Undergoes serine-specific autophosphorylation. Phosphorylated at Thr-449 by TOR. Expressed in all tissues.

The protein localises to the cytoplasm. It localises to the nucleus. The catalysed reaction is L-seryl-[protein] + ATP = O-phospho-L-seryl-[protein] + ADP + H(+). The enzyme catalyses L-threonyl-[protein] + ATP = O-phospho-L-threonyl-[protein] + ADP + H(+). Its activity is regulated as follows. Activated by PDK1. Repressed during osmotic stress. Downstream effector of TOR signaling pathway involved in osmotic stress response. Could be involved in the control of plant growth and development. Phosphorylates the ribosomal proteins P14, P16 and S6. Functions as a repressor of cell proliferation and required for maintenance of chromosome stability and ploidy levels through the RBR1-E2F pathway. Mediates the phosphorylation of MRFs (e.g. MRF1). The sequence is that of Serine/threonine-protein kinase AtPK1/AtPK6 from Arabidopsis thaliana (Mouse-ear cress).